The sequence spans 128 residues: Sulfurtransferase TusD (128 aa).

Residue Cys78 is the Cysteine persulfide intermediate of the active site.

The protein belongs to the DsrE/TusD family. As to quaternary structure, heterohexamer, formed by a dimer of trimers. The hexameric TusBCD complex contains 2 copies each of TusB, TusC and TusD. The TusBCD complex interacts with TusE.

The protein localises to the cytoplasm. In terms of biological role, part of a sulfur-relay system required for 2-thiolation of 5-methylaminomethyl-2-thiouridine (mnm(5)s(2)U) at tRNA wobble positions. Accepts sulfur from TusA and transfers it in turn to TusE. The protein is Sulfurtransferase TusD of Escherichia coli O157:H7.